Here is a 675-residue protein sequence, read N- to C-terminus: Heat shock 70 kDa protein 12A (675 aa).

A disordered region spans residues 1-45; it reads MADKEAGGGDAGPRETAPTSTYSSPARSLGDTGITPLSPSHILND. Position 2 is an N-acetylalanine (alanine 2). The span at 17–26 shows a compositional bias: polar residues; the sequence is APTSTYSSPA.

The protein belongs to the heat shock protein 70 family. In terms of assembly, interacts with SORL1 (via cytosolic C-terminus); this interaction affects SORL1 internalization and subcellular localization. Expressed most strongly in brain, kidney and heart with little or no expression in other tissues. In the brain, expressed in glial cells, including astrocytes (at protein level). In the aorta, preferentially expressed in lesions.

Its subcellular location is the cytoplasm. It localises to the nucleus. Adapter protein for SORL1, but not SORT1. Delays SORL1 internalization and affects SORL1 subcellular localization. This Mus musculus (Mouse) protein is Heat shock 70 kDa protein 12A (Hspa12a).